Here is an 832-residue protein sequence, read N- to C-terminus: Polyphosphoinositide phosphatase (832 aa).

One can recognise an SAC domain in the interval 145–491 (IEKVDLARTF…GDAIALQYGG (347 aa)).

In terms of assembly, component of the PI(3,5)P2 regulatory complex. Mg(2+) is required as a cofactor.

Its subcellular location is the cytoplasm. It localises to the vacuole membrane. The catalysed reaction is a 1,2-diacyl-sn-glycero-3-phospho-(1D-myo-inositol-3,5-bisphosphate) + H2O = a 1,2-diacyl-sn-glycero-3-phospho-(1D-myo-inositol-3-phosphate) + phosphate. Functionally, the PI(3,5)P2 regulatory complex regulates both the synthesis and turnover of phosphatidylinositol 3,5-bisphosphate (PtdIns(3,5)P2). This is Polyphosphoinositide phosphatase from Schizosaccharomyces pombe (strain 972 / ATCC 24843) (Fission yeast).